The chain runs to 437 residues: UDP-N-acetylmuramoylalanine--D-glutamate ligase (437 aa).

112–118 contributes to the ATP binding site; it reads GSNGKST.

It belongs to the MurCDEF family.

Its subcellular location is the cytoplasm. The enzyme catalyses UDP-N-acetyl-alpha-D-muramoyl-L-alanine + D-glutamate + ATP = UDP-N-acetyl-alpha-D-muramoyl-L-alanyl-D-glutamate + ADP + phosphate + H(+). The protein operates within cell wall biogenesis; peptidoglycan biosynthesis. Cell wall formation. Catalyzes the addition of glutamate to the nucleotide precursor UDP-N-acetylmuramoyl-L-alanine (UMA). In Haemophilus influenzae (strain PittGG), this protein is UDP-N-acetylmuramoylalanine--D-glutamate ligase.